Reading from the N-terminus, the 362-residue chain is Talin rod domain-containing protein 1 (362 aa).

The tract at residues 1-26 is disordered; that stretch reads MASGSAGKPTGEAASPAPASAIGGAS. Ala2 is modified (N-acetylalanine). Residues 13–26 show a composition bias toward low complexity; sequence AASPAPASAIGGAS.

In terms of assembly, may homodimerize. Interacts with F-actin.

Its function is as follows. Actin-binding protein which may have an oncogenic function and regulates cell proliferation, migration and invasion in cancer cells. This is Talin rod domain-containing protein 1 from Homo sapiens (Human).